Here is a 110-residue protein sequence, read N- to C-terminus: NADH-quinone oxidoreductase subunit K (110 aa).

3 helical membrane-spanning segments follow: residues 13-33 (VTHGLIFSILLFVISVAGIII), 38-58 (ILILLMSIELMLLAVNTNFLI), and 70-90 (VFVFFIMAVAAAETAIGLAIV).

Belongs to the complex I subunit 4L family. NDH-1 is composed of 14 different subunits. Subunits NuoA, H, J, K, L, M, N constitute the membrane sector of the complex.

The protein localises to the cell inner membrane. It catalyses the reaction a quinone + NADH + 5 H(+)(in) = a quinol + NAD(+) + 4 H(+)(out). Functionally, NDH-1 shuttles electrons from NADH, via FMN and iron-sulfur (Fe-S) centers, to quinones in the respiratory chain. The immediate electron acceptor for the enzyme in this species is believed to be ubiquinone. Couples the redox reaction to proton translocation (for every two electrons transferred, four hydrogen ions are translocated across the cytoplasmic membrane), and thus conserves the redox energy in a proton gradient. The chain is NADH-quinone oxidoreductase subunit K from Francisella tularensis subsp. holarctica (strain FTNF002-00 / FTA).